Reading from the N-terminus, the 223-residue chain is Glutathione-specific gamma-glutamylcyclotransferase 1 (223 aa).

Residues 1-26 (MKQESASQSTPPPSLSPAPSSAQPSW) form a disordered region. 36–41 (IFGYGS) lines the substrate pocket. E116 functions as the Proton acceptor in the catalytic mechanism.

The protein belongs to the gamma-glutamylcyclotransferase family. ChaC subfamily. Interacts with NOTCH1 (via extracellular region). In terms of tissue distribution, widely expressed, with high expression in forebrain and anterior spinal cord. Expressed at intermediate level in the dorsal aorta and heart. Present throughout adult brain (at protein level).

It is found in the cytoplasm. Its subcellular location is the cytosol. It localises to the golgi apparatus. The protein resides in the trans-Golgi network. The catalysed reaction is glutathione = L-cysteinylglycine + 5-oxo-L-proline. In terms of biological role, catalyzes the cleavage of glutathione into 5-oxo-L-proline and a Cys-Gly dipeptide. Acts specifically on glutathione, but not on other gamma-glutamyl peptides. Glutathione depletion is an important factor for apoptosis initiation and execution. Acts as a pro-apoptotic component of the unfolded protein response pathway by mediating the pro-apoptotic effects of the ATF4-ATF3-DDIT3/CHOP cascade. Negative regulator of Notch signaling pathway involved in embryonic neurogenesis: acts by inhibiting Notch cleavage by furin, maintaining Notch in an immature inactive form, thereby promoting neurogenesis in embryos. This chain is Glutathione-specific gamma-glutamylcyclotransferase 1, found in Mus musculus (Mouse).